The sequence spans 581 residues: Transcription factor GTE2 (581 aa).

The segment at 130 to 153 (VKKTKTKKKKIGHGQKRSNPFATD) is disordered. A compositionally biased stretch (basic residues) spans 131-145 (KKTKTKKKKIGHGQK). Residues 169 to 275 (KVLKSMMTTC…SQFDVWFNPT (107 aa)) enclose the Bromo domain. Disordered regions lie at residues 329-399 (PLLP…KREM) and 470-581 (KRQG…KEAP). Residues 346-365 (PSPPPSPVQPPPPPSPPPQP) show a composition bias toward pro residues. The region spanning 389-470 (PKAKDPNKRE…NYRKMASKIK (82 aa)) is the NET domain. 2 stretches are compositionally biased toward basic and acidic residues: residues 390–399 (KAKDPNKREM) and 493–503 (SAEKRGRKGGE). The segment covering 504 to 517 (AGEEDVDIGEDIPV) has biased composition (acidic residues). Residues 530–564 (TAAAASGGSSSSGSFSSSGSSSSSDSESGSSSGSD) show a composition bias toward low complexity.

The protein localises to the nucleus. This chain is Transcription factor GTE2 (GTE2), found in Arabidopsis thaliana (Mouse-ear cress).